A 177-amino-acid polypeptide reads, in one-letter code: Phycoerythrin beta subunit (177 aa).

Tyr-18, Lys-28, Asn-35, and Asp-39 together coordinate (2R,3E)-phycoerythrobilin. Residues Cys-50, Asp-54, and Cys-61 each coordinate 15,16-dihydrobiliverdin. Positions 82, 84, and 85 each coordinate (2R,3E)-phycoerythrobilin. Arg-129 serves as a coordination point for 15,16-dihydrobiliverdin. Asn-144 contributes to the (2R,3E)-phycoerythrobilin binding site. 2 residues coordinate 15,16-dihydrobiliverdin: Gln-148 and Lys-149. (2R,3E)-phycoerythrobilin is bound by residues Pro-154, Gly-156, and Cys-158.

The protein belongs to the phycobiliprotein family. In terms of assembly, heterotetramer of 2 different alpha chains and 2 identical beta chains which form 2 alpha-beta heterodimers within the heterotetramer. The two alpha-beta heterodimers are rotated to an open configuration in contrast to the closed configuration found in other cryptophyte species due to the insertion of a single amino acid, 'Asp-65', in a conserved region of the alpha chain. In the open form, the central chromophores are not in physical contact but are separated by a water-filled channel. In terms of processing, contains three phycoerythrobilin chromophores and one 15,16-dihydrobiliverdin chromophore with binding of the phycoerythrobilin chromophores mediated by both the alpha and beta subunits.

The protein resides in the plastid. Its subcellular location is the chloroplast thylakoid membrane. Light-harvesting photosynthetic bile pigment-protein from the phycobiliprotein complex. The protein is Phycoerythrin beta subunit of Hemiselmis andersenii (Cryptophyte alga).